We begin with the raw amino-acid sequence, 87 residues long: Small ribosomal subunit protein uS19 (87 aa).

Residues 1–29 form a disordered region; sequence MARSLKKGPFVDHHLQKKVDVQNKEGTKK. The span at 9 to 28 shows a compositional bias: basic and acidic residues; the sequence is PFVDHHLQKKVDVQNKEGTK.

This sequence belongs to the universal ribosomal protein uS19 family.

Its function is as follows. Protein S19 forms a complex with S13 that binds strongly to the 16S ribosomal RNA. This Protochlamydia amoebophila (strain UWE25) protein is Small ribosomal subunit protein uS19.